We begin with the raw amino-acid sequence, 508 residues long: uncharacterized protein (508 aa).

A run of 12 helical transmembrane segments spans residues 65–87 (IFPV…SYAV), 104–124 (WSGT…SLLL), 136–156 (FLVI…PGFI), 160–180 (VLLG…TAQW), 192–212 (VWVA…YGLA), 224–244 (LIFI…LAVV), 292–312 (TWIM…IGTF), 333–353 (LPAG…SLFI), 357–377 (MVLA…LSFA), 384–404 (LAGY…FAII), 416–436 (TVGV…PQTF), and 450–470 (TMVG…YVNW).

The protein belongs to the major facilitator superfamily. Allantoate permease family.

It localises to the endoplasmic reticulum. The protein localises to the golgi apparatus. The protein resides in the membrane. This is an uncharacterized protein from Schizosaccharomyces pombe (strain 972 / ATCC 24843) (Fission yeast).